A 566-amino-acid polypeptide reads, in one-letter code: 2-isopropylmalate synthase (566 aa).

Positions Pro32–Asp306 constitute a Pyruvate carboxyltransferase domain. Mg(2+)-binding residues include Asp41, His245, His247, and Asn281. Positions Pro451–Arg566 are regulatory domain.

Belongs to the alpha-IPM synthase/homocitrate synthase family. LeuA type 2 subfamily. As to quaternary structure, homodimer. Mg(2+) serves as cofactor.

It is found in the cytoplasm. It catalyses the reaction 3-methyl-2-oxobutanoate + acetyl-CoA + H2O = (2S)-2-isopropylmalate + CoA + H(+). The protein operates within amino-acid biosynthesis; L-leucine biosynthesis; L-leucine from 3-methyl-2-oxobutanoate: step 1/4. Catalyzes the condensation of the acetyl group of acetyl-CoA with 3-methyl-2-oxobutanoate (2-ketoisovalerate) to form 3-carboxy-3-hydroxy-4-methylpentanoate (2-isopropylmalate). This chain is 2-isopropylmalate synthase, found in Mycobacterium ulcerans (strain Agy99).